A 1396-amino-acid polypeptide reads, in one-letter code: Probable ATP-dependent RNA helicase spindle-E (1396 aa).

Residues 1–34 form a disordered region; it reads MDEAAGPSTSRTSNLEDVDDEGASLAEEDEEHTK. Residues 16-30 are compositionally biased toward acidic residues; the sequence is EDVDDEGASLAEEDE. One can recognise a Helicase ATP-binding domain in the interval 68–234; sequence LDKIRSNAVV…FKIPKKSGYL (167 aa). ATP is bound at residue 81–88; it reads GATGCGKT. The DEAH box signature appears at 180–183; sequence DEVH. The Helicase C-terminal domain occupies 292 to 468; the sequence is KGQEFGDSLE…TVVLKAKLLE (177 aa). The region spanning 885–950 is the Tudor domain; that stretch reads NFAMGQMVAA…RQLDDSLGQL (66 aa).

Belongs to the DEAD box helicase family. DEAH subfamily.

It is found in the cytoplasm. The enzyme catalyses ATP + H2O = ADP + phosphate + H(+). In terms of biological role, probable ATP-binding RNA helicase which plays a central role during gametogenesis by repressing transposable elements and preventing their mobilization, which is essential for the germline integrity. Acts via the piRNA metabolic process, which mediates the repression of transposable elements during meiosis by forming complexes composed of piRNAs and Piwi proteins and govern the methylation and subsequent repression of transposons. This is Probable ATP-dependent RNA helicase spindle-E (spn-E) from Culex quinquefasciatus (Southern house mosquito).